The sequence spans 697 residues: Portal protein (697 aa).

A disordered region spans residues 633–697; it reads MSREAAGGVP…RRAGGPYGFH (65 aa). Basic and acidic residues predominate over residues 664–689; it reads ITADEERRGPERVGRFRNGGPDDPRR.

The protein belongs to the herpesviridae portal protein family. As to quaternary structure, homododecamerizes. Interacts with terminase subunits TRM1 and TRM3.

The protein resides in the virion. The protein localises to the host nucleus. Forms a portal in the viral capsid through which viral DNA is translocated during DNA packaging. Assembles as a dodecamer at a single fivefold axe of the T=16 icosahedric capsid. Binds to the molecular motor that translocates the viral DNA, termed terminase. The protein is Portal protein (UL104) of Homo sapiens (Human).